We begin with the raw amino-acid sequence, 204 residues long: Putative F-box protein L168 (204 aa).

The 46-residue stretch at 1-46 (MNLCDLFDEIIIGIIDELSDRDKIKFMTTCSRFYYFIDKTKYFDIY) folds into the F-box domain. The disordered stretch occupies residues 161-184 (NETNKITNNHTNKKINNNKKHQNN). Residues 171-183 (TNKKINNNKKHQN) are compositionally biased toward basic residues.

This Acanthamoeba polyphaga (Amoeba) protein is Putative F-box protein L168.